The primary structure comprises 2515 residues: Zinc finger FYVE domain-containing protein 26 (2515 aa).

Disordered regions lie at residues 520 to 540 (GPSDDLASVAEPMNDPPSSPG), 586 to 634 (PHLP…EPHG), 672 to 696 (SSRGPPEKPKLLEDQSGSGSRDGLQ), and 718 to 800 (SIQG…SSLI). The segment covering 623–634 (PEPKDSSPEPHG) has biased composition (basic and acidic residues). Positions 738-748 (PSLRRGRRTRK) are enriched in basic residues. Over residues 749 to 758 (SRADDQDKGS) the composition is skewed to basic and acidic residues. Low complexity predominate over residues 759 to 783 (RSSLENTSSELSTSTSEGSLSAASG). Ser774 carries the post-translational modification Phosphoserine. Residues 842 to 869 (MFMERYQEVIQELAQVEHKIENQNSDGG) adopt a coiled-coil conformation. The tract at residues 1253–1273 (TENPTLERKPPSSPRDSSPPA) is disordered. Phosphoserine is present on residues Ser1718, Ser1740, Ser1756, and Ser1758. Residues 1740-1760 (SAEFSSATAPGVSTVHSPSVR) are disordered. The FYVE-type zinc finger occupies 1788–1848 (DESESVCMVC…VCDQCYSYFN (61 aa)). The Zn(2+) site is built by Cys1794, Cys1797, Cys1811, Cys1814, Cys1819, Cys1822, Cys1840, and Cys1843.

Belongs to the ZFYVE26 family. As to quaternary structure, interacts with AP5Z1, AP5B1, AP5S1 and SPG11. Interacts with TTC19 and KIF13A.

It localises to the cytoplasm. It is found in the cytoskeleton. The protein localises to the microtubule organizing center. The protein resides in the centrosome. Its subcellular location is the midbody. Its function is as follows. Phosphatidylinositol 3-phosphate-binding protein required for the abscission step in cytokinesis: recruited to the midbody during cytokinesis and acts as a regulator of abscission. May also be required for efficient homologous recombination DNA double-strand break repair. This Bos taurus (Bovine) protein is Zinc finger FYVE domain-containing protein 26 (ZFYVE26).